We begin with the raw amino-acid sequence, 360 residues long: Peptide chain release factor 1 (360 aa).

Gln-234 bears the N5-methylglutamine mark.

It belongs to the prokaryotic/mitochondrial release factor family. Post-translationally, methylated by PrmC. Methylation increases the termination efficiency of RF1.

The protein localises to the cytoplasm. Functionally, peptide chain release factor 1 directs the termination of translation in response to the peptide chain termination codons UAG and UAA. In Clostridium botulinum (strain Eklund 17B / Type B), this protein is Peptide chain release factor 1.